Reading from the N-terminus, the 294-residue chain is Taste receptor type 2 member 143 (294 aa).

Residues 1 to 7 (MPSTPTL) lie on the Extracellular side of the membrane. A helical transmembrane segment spans residues 8–28 (IFIVIFFLVSVASMLQNGFMI). Over 29-43 (IVLGREWMRNRALPA) the chain is Cytoplasmic. The helical transmembrane segment at 44–64 (VDMIVASLASSRFCLHGIAIL) threads the bilayer. The Extracellular portion of the chain corresponds to 65 to 80 (NNFLASFDFCYQANFV). A helical transmembrane segment spans residues 81-101 (GILWDFINTLILWLTAWLAIF). At 102 to 128 (YCVKISSFSHPVLFWLKWRISQLVPRL) the chain is on the cytoplasmic side. The helical transmembrane segment at 129–149 (LLVSLIMGGLSAIISATGNII) threads the bilayer. Over 150–180 (ANQMIISQGFHGNCTFGHMSLDFYRYYYLSH) the chain is Extracellular. Asparagine 162 carries an N-linked (GlcNAc...) asparagine glycan. Residues 181 to 201 (AVLMWFTPFFLFLVSIIFLMF) form a helical membrane-spanning segment. Topologically, residues 202–227 (SLYRHVEKMRGHRPGPWDPRTQAHTM) are cytoplasmic. The helical transmembrane segment at 228-248 (ALKSLTVFITFYILFFLALII) threads the bilayer. Residues 249–260 (SSTKSKTMHSYW) are Extracellular-facing. Residues 261 to 281 (YWVREIIIYTGIFLNSIILVL) form a helical membrane-spanning segment. Topologically, residues 282–294 (SNPKLRKALKMRF) are cytoplasmic.

This sequence belongs to the G-protein coupled receptor T2R family.

Its subcellular location is the membrane. Functionally, putative taste receptor which may play a role in the perception of bitterness. This chain is Taste receptor type 2 member 143, found in Rattus norvegicus (Rat).